We begin with the raw amino-acid sequence, 825 residues long: Protein SEY1 homolog 2 (825 aa).

Residues 1–21 (MDEVSPTKHFTSKPLLPTKTP) form a disordered region. The Cytoplasmic portion of the chain corresponds to 1–728 (MDEVSPTKHF…EKENSEIKYQ (728 aa)). The GB1/RHD3-type G domain maps to 83 to 305 (GMDYNAVGIL…FLPQYNKEIP (223 aa)). 93–100 (GAQSSGKS) provides a ligand contact to GTP. Residues 373 to 397 (KVFTKQIDAALERYKEVTERYMETI) are a coiled coil. Residues 729-749 (IPLYLIVLVVFFGFDEFIAIL) traverse the membrane as a helical segment. The Lumenal segment spans residues 750–752 (TNP). A helical membrane pass occupies residues 753–773 (LLFILTLIIGGGVYIGYKLNL). Over 774-825 (GGVAKNYIQYLLSMSLSSTMEYLRTIPFFTPLIDKVWPKDDNNTEETQEEIK) the chain is Cytoplasmic.

It belongs to the TRAFAC class dynamin-like GTPase superfamily. GB1/RHD3 GTPase family. RHD3 subfamily.

The protein resides in the endoplasmic reticulum membrane. Its function is as follows. Probable GTP-binding protein that may be involved in cell development. In Entamoeba histolytica (strain ATCC 30459 / HM-1:IMSS / ABRM), this protein is Protein SEY1 homolog 2.